Consider the following 411-residue polypeptide: MTQGPIQVNSEIGRLKTVLLKRPGKELENLVPDHLSGLLFDDIPYLKVAQEEHDKFAQTLRDEGVEVVYLEKLAAEAIADKDVREQFIDDILAESQKTVLGHEAEIKTFFAKLSDQELIDKIMAGVRKEEIELKTTHLVEYMDDRYPFYLDPMPNLYFTRDPQASVGRGMTINRMYWRARRRESLFMTYILKYHPRFKDADVPVWLDRNSPFNIEGGDELILSKEALAIGISERTSAQAIERLARNIFKDESTTFKKVIAIEIPNSRTFMHLDTVFTMIDYDKFTVHSAIFKEENNMNLFTIEYDEAKDDIKITHSNKLRETLADVLGVEKIEFIPTGNGDVIDGAREQWNDGSNTLCIRPGVVVTYDRNYVSNQLLRDKGIKVLEITGSELVRGRGGPRCMSQPLFREDI.

C401 serves as the catalytic Amidino-cysteine intermediate.

The protein belongs to the arginine deiminase family.

The protein localises to the cytoplasm. It carries out the reaction L-arginine + H2O = L-citrulline + NH4(+). It functions in the pathway amino-acid degradation; L-arginine degradation via ADI pathway; carbamoyl phosphate from L-arginine: step 1/2. The sequence is that of Arginine deiminase from Staphylococcus haemolyticus (strain JCSC1435).